The following is a 76-amino-acid chain: MLQLVNDNGVVVNAILWLFVLFFVLVISITFVQLINLCFTCHRLCNNVVYKPVGKVYGVYKSYMRIQPLTSDIIQV.

The Virion surface segment spans residues 1–14; that stretch reads MLQLVNDNGVVVNA. Residues 15 to 35 form a helical membrane-spanning segment; sequence ILWLFVLFFVLVISITFVQLI. The Intravirion portion of the chain corresponds to 36-76; that stretch reads NLCFTCHRLCNNVVYKPVGKVYGVYKSYMRIQPLTSDIIQV.

Belongs to the alphacoronaviruses E protein family. In terms of assembly, homopentamer. Interacts with membrane protein M in the budding compartment of the host cell, which is located between endoplasmic reticulum and the Golgi complex. Interacts with Nucleoprotein.

Its subcellular location is the host Golgi apparatus membrane. Functionally, plays a central role in virus morphogenesis and assembly. Acts as a viroporin and self-assembles in host membranes forming pentameric protein-lipid pores that allow ion transport. Also plays a role in the induction of apoptosis. This is Envelope small membrane protein from Scotophilus kuhlii (Lesser asiatic yellow bat).